The chain runs to 160 residues: Cyclic pyranopterin monophosphate synthase (160 aa).

Residues 75-77 and 113-114 contribute to the substrate site; these read LCH and ME. D128 is a catalytic residue.

Belongs to the MoaC family. As to quaternary structure, homohexamer; trimer of dimers.

The enzyme catalyses (8S)-3',8-cyclo-7,8-dihydroguanosine 5'-triphosphate = cyclic pyranopterin phosphate + diphosphate. It participates in cofactor biosynthesis; molybdopterin biosynthesis. Functionally, catalyzes the conversion of (8S)-3',8-cyclo-7,8-dihydroguanosine 5'-triphosphate to cyclic pyranopterin monophosphate (cPMP). The sequence is that of Cyclic pyranopterin monophosphate synthase from Methylobacterium sp. (strain 4-46).